Consider the following 387-residue polypeptide: uncharacterized protein (387 aa).

The segment at 1-23 (MSSLPRNAVARNSKMHKKRDSGV) is disordered. Positions 98-129 (KIARDLKKRQEDYEKTKLEVERLKRSEELANK) form a coiled coil. The interval 146 to 255 (ENNTVEPNNE…NKKKKKEKNK (110 aa)) is disordered. Low complexity-rich tracts occupy residues 162–175 (EQITEQTVEQTTEQ) and 182–194 (EQTTEKTTQQTAE). Over residues 204-213 (TVEKSGDQST) the composition is skewed to basic and acidic residues. The segment covering 214-231 (EKTTQQTAEESVEQSTEQ) has biased composition (polar residues).

This is an uncharacterized protein from Acanthamoeba polyphaga mimivirus (APMV).